We begin with the raw amino-acid sequence, 237 residues long: Ribonuclease PH (237 aa).

Residues R86 and 124 to 126 contribute to the phosphate site; that span reads GTR.

The protein belongs to the RNase PH family. As to quaternary structure, homohexameric ring arranged as a trimer of dimers.

It catalyses the reaction tRNA(n+1) + phosphate = tRNA(n) + a ribonucleoside 5'-diphosphate. Functionally, phosphorolytic 3'-5' exoribonuclease that plays an important role in tRNA 3'-end maturation. Removes nucleotide residues following the 3'-CCA terminus of tRNAs; can also add nucleotides to the ends of RNA molecules by using nucleoside diphosphates as substrates, but this may not be physiologically important. Probably plays a role in initiation of 16S rRNA degradation (leading to ribosome degradation) during starvation. This is Ribonuclease PH from Shewanella frigidimarina (strain NCIMB 400).